Here is a 28-residue protein sequence, read N- to C-terminus: Putative fruR/shl operon leader peptide (28 aa).

The chain is Putative fruR/shl operon leader peptide (fruL) from Escherichia coli O6:H1 (strain CFT073 / ATCC 700928 / UPEC).